The following is a 404-amino-acid chain: Glucose-1-phosphate adenylyltransferase (404 aa).

Residues Tyr-99, Gly-164, 179 to 180, and Ser-197 each bind alpha-D-glucose 1-phosphate; that span reads EK.

Belongs to the bacterial/plant glucose-1-phosphate adenylyltransferase family.

The enzyme catalyses alpha-D-glucose 1-phosphate + ATP + H(+) = ADP-alpha-D-glucose + diphosphate. Its pathway is capsule biogenesis; capsule polysaccharide biosynthesis. It functions in the pathway glycan biosynthesis; glycogen biosynthesis. In terms of biological role, involved in the biosynthesis of ADP-glucose, a building block, required in the biosynthesis of maltose-1-phosphate (M1P) and in the elongation reactions to produce linear alpha-1,4-glucans. Catalyzes the reaction between ATP and alpha-D-glucose 1-phosphate (G1P) to produce pyrophosphate and ADP-Glc. This is Glucose-1-phosphate adenylyltransferase from Mycobacterium leprae (strain Br4923).